Here is a 571-residue protein sequence, read N- to C-terminus: Arginine--tRNA ligase (571 aa).

Residues 122-132 carry the 'HIGH' region motif; the sequence is PNIAKEMHVGH.

It belongs to the class-I aminoacyl-tRNA synthetase family. Monomer.

The protein resides in the cytoplasm. The catalysed reaction is tRNA(Arg) + L-arginine + ATP = L-arginyl-tRNA(Arg) + AMP + diphosphate. This is Arginine--tRNA ligase from Buchnera aphidicola subsp. Cinara cedri (strain Cc).